We begin with the raw amino-acid sequence, 88 residues long: Pape peptide (88 aa).

An N-terminal signal peptide occupies residues 1–22 (MNRKTLLVIFFVTLLIAEEVNS). Residues 23 to 45 (FRLGGFLKKIWRSKLVKRLRSKG) constitute a propeptide that is removed on maturation. Residues 49–88 (LKEALAPEPAPEPAPEPAPEAAPEAAPEPAAAAPERRRRR) form a disordered region. The segment covering 56-68 (EPAPEPAPEPAPE) has biased composition (pro residues). 3 PAPE repeats span residues 57–60 (PAPE), 61–64 (PAPE), and 65–68 (PAPE). Positions 69–81 (AAPEAAPEPAAAA) are enriched in low complexity.

As to expression, expressed by the venom gland.

The protein localises to the secreted. In Tityus serrulatus (Brazilian scorpion), this protein is Pape peptide.